Reading from the N-terminus, the 578-residue chain is Proline--tRNA ligase (578 aa).

It belongs to the class-II aminoacyl-tRNA synthetase family. ProS type 1 subfamily. Homodimer.

It is found in the cytoplasm. It carries out the reaction tRNA(Pro) + L-proline + ATP = L-prolyl-tRNA(Pro) + AMP + diphosphate. Catalyzes the attachment of proline to tRNA(Pro) in a two-step reaction: proline is first activated by ATP to form Pro-AMP and then transferred to the acceptor end of tRNA(Pro). As ProRS can inadvertently accommodate and process non-cognate amino acids such as alanine and cysteine, to avoid such errors it has two additional distinct editing activities against alanine. One activity is designated as 'pretransfer' editing and involves the tRNA(Pro)-independent hydrolysis of activated Ala-AMP. The other activity is designated 'posttransfer' editing and involves deacylation of mischarged Ala-tRNA(Pro). The misacylated Cys-tRNA(Pro) is not edited by ProRS. The sequence is that of Proline--tRNA ligase from Burkholderia ambifaria (strain ATCC BAA-244 / DSM 16087 / CCUG 44356 / LMG 19182 / AMMD) (Burkholderia cepacia (strain AMMD)).